Consider the following 354-residue polypeptide: Eukaryotic translation initiation factor 3 subunit H (354 aa).

The interval Met-1–Ser-28 is disordered. Residues Gln-19–Ser-28 are compositionally biased toward polar residues. The 142-residue stretch at Val-33–Ala-174 folds into the MPN domain.

Belongs to the eIF-3 subunit H family. As to quaternary structure, component of the eukaryotic translation initiation factor 3 (eIF-3) complex.

The protein resides in the cytoplasm. Functionally, component of the eukaryotic translation initiation factor 3 (eIF-3) complex, which is involved in protein synthesis of a specialized repertoire of mRNAs and, together with other initiation factors, stimulates binding of mRNA and methionyl-tRNAi to the 40S ribosome. The eIF-3 complex specifically targets and initiates translation of a subset of mRNAs involved in cell proliferation. The protein is Eukaryotic translation initiation factor 3 subunit H of Monosiga brevicollis (Choanoflagellate).